The primary structure comprises 87 residues: Omega-theraphotoxin-Gr1a (87 aa).

A signal peptide spans 1–24 (MKAQIFVVVLGLAALSVLCYGSEA). Positions 25–49 (DESALHEEIFQLLAASDEVPKPQER) are excised as a propeptide. 3 disulfide bridges follow: Cys51–Cys65, Cys58–Cys70, and Cys64–Cys79. Val85 is subject to Valine amide.

As to expression, expressed by the venom gland.

It is found in the secreted. Its function is as follows. Inhibits P/Q- (Cav2.1/CACNA1A) and N-type (Cav2.2/CACNA1B) voltage-gated calcium channel by modifying voltage-dependent gating. It selectively and reversibly blocks the calcium channels coupled to glutamate release. Also inhibits potassium channels (Kv2.1/KCNB1) with lower affinity. Has also been shown to weakly inhibit Kv11.1/KCNH2/ERG1, Kv1.2/KCNA2, Kv1.3/KCNA3, Nav1.5/SCN5A, Nav1.7/SCN9A and TRPV1. This chain is Omega-theraphotoxin-Gr1a, found in Grammostola rosea (Chilean rose tarantula).